The chain runs to 380 residues: Glycogenin-2 (380 aa).

The UDP site is built by Leu-10, Tyr-16, and Arg-95. Leu-10, Tyr-16, Arg-95, Lys-104, Asp-120, Ala-121, Asp-122, Asn-158, Thr-159, Asp-185, Asp-188, and Gln-189 together coordinate UDP-alpha-D-glucose. Positions 120, 121, and 122 each coordinate UDP. Position 120 (Asp-120) interacts with Mn(2+). Asp-122 contacts Mn(2+). Tyr-230 and Tyr-232 each carry an O-linked (Glc...) tyrosine glycan. The UDP site is built by His-249, Gly-252, and Lys-255. His-249 serves as a coordination point for Mn(2+). The UDP-alpha-D-glucose site is built by Gly-252 and Lys-255. The interval 331 to 357 (SVDRNASQKSTAEKHDIEKPTSKPQSA) is disordered. The span at 341 to 351 (TAEKHDIEKPT) shows a compositional bias: basic and acidic residues. Tyr-367 carries an O-linked (Glc...) tyrosine glycan.

Belongs to the glycosyltransferase 8 family. Glycogenin subfamily. In terms of assembly, interacts with glycogen synthase GSY2. Requires Mn(2+) as cofactor.

Its subcellular location is the cytoplasm. The protein localises to the vacuole. It carries out the reaction L-tyrosyl-[glycogenin] + UDP-alpha-D-glucose = alpha-D-glucosyl-L-tyrosyl-[glycogenin] + UDP + H(+). The catalysed reaction is [1,4-alpha-D-glucosyl](n)-L-tyrosyl-[glycogenin] + UDP-alpha-D-glucose = [1,4-alpha-D-glucosyl](n+1)-L-tyrosyl-[glycogenin] + UDP + H(+). Its function is as follows. Self-glucosylating initiator of glycogen synthesis. It catalyzes the formation of a short alpha (1,4)-glucosyl chain covalently attached via a glucose 1-O-tyrosyl linkage to internal tyrosine residues and these chains act as primers for the elongation reaction catalyzed by glycogen synthase. Capable of transferring glucosyl residues to unbound acceptors such as free oligoglucans or oligoglucan derivatives. The sequence is that of Glycogenin-2 (GLG2) from Saccharomyces cerevisiae (strain YJM789) (Baker's yeast).